The following is an 87-amino-acid chain: Putative defensin-like protein 317 (87 aa).

Positions Met-1–Gly-24 are cleaved as a signal peptide. 3 disulfides stabilise this stretch: Cys-38-Cys-71, Cys-47-Cys-80, and Cys-56-Cys-82.

Belongs to the DEFL family.

It is found in the secreted. The protein is Putative defensin-like protein 317 of Arabidopsis thaliana (Mouse-ear cress).